A 425-amino-acid polypeptide reads, in one-letter code: Isocitrate dehydrogenase [NADP] (425 aa).

Position 114 (T114) interacts with NADP(+). D-threo-isocitrate-binding residues include S123, N125, R129, R139, and R162. A Mg(2+)-binding site is contributed by D316. Residues 348 to 354 (HGTAPKY), N361, Y400, and R404 each bind NADP(+).

This sequence belongs to the isocitrate and isopropylmalate dehydrogenases family. As to quaternary structure, homodimer. It depends on Mg(2+) as a cofactor. Mn(2+) is required as a cofactor.

It carries out the reaction D-threo-isocitrate + NADP(+) = 2-oxoglutarate + CO2 + NADPH. Functionally, catalyzes the oxidative decarboxylation of isocitrate to 2-oxoglutarate and carbon dioxide with the concomitant reduction of NADP(+). This chain is Isocitrate dehydrogenase [NADP] (icd), found in Helicobacter pylori (strain J99 / ATCC 700824) (Campylobacter pylori J99).